The following is a 489-amino-acid chain: Ubiquitin-like-specific protease ESD4 (489 aa).

A disordered region spans residues alanine 43–aspartate 66. Polar residues predominate over residues proline 51–arginine 60. Positions alanine 200 to leucine 223 form a coiled coil. Active-site residues include histidine 380, aspartate 397, and cysteine 448.

It belongs to the peptidase C48 family. As to quaternary structure, interacts with NUA (via N-terminus). Interacts with KIN10. As to expression, expressed in seedlings, leaves, shoots, flowers and roots.

The protein resides in the nucleus membrane. The catalysed reaction is Hydrolysis of the alpha-linked peptide bond in the sequence Gly-Gly-|-Ala-Thr-Tyr at the C-terminal end of the small ubiquitin-like modifier (SUMO) propeptide, Smt3, leading to the mature form of the protein. A second reaction involves the cleavage of an epsilon-linked peptide bond between the C-terminal glycine of the mature SUMO and the lysine epsilon-amino group of the target protein.. Inhibited by thiol reagent and N-ethylmaleimide, but not by ubiquitin aldehyde, pepstatin A or benzamidine HCl. Its function is as follows. Protease that catalyzes two essential functions in the SUMO pathway: processing of full-length SUMOs to their mature forms and deconjugation of SUMO from targeted proteins. Cleaves precursors of SUM1 and SUM2, but not of SUM3 or SUM5. Able to release SUM1 and SUM2 from conjugates, but unable to cleave SUM3. Acts predominantly as an isopeptidase, cleaving SUMO-conjugated proteins better than SUMO peptides. Plays an important role in the control of flowering time. This Arabidopsis thaliana (Mouse-ear cress) protein is Ubiquitin-like-specific protease ESD4 (ESD4).